Consider the following 385-residue polypeptide: Probable dual-specificity RNA methyltransferase RlmN (385 aa).

Residues 1 to 35 (MNVKEPAEEAAIQLRTERQRIEPEGEEQSEQPTDL) form a disordered region. The active-site Proton acceptor is glutamate 121. A Radical SAM core domain is found at 132-367 (TRDRVTVCLS…AVIREERGQD (236 aa)). Residues cysteine 139 and cysteine 372 are joined by a disulfide bond. [4Fe-4S] cluster contacts are provided by cysteine 146, cysteine 150, and cysteine 153. S-adenosyl-L-methionine-binding positions include 198–199 (GE), serine 230, 253–255 (SLH), and asparagine 329. The active-site S-methylcysteine intermediate is the cysteine 372.

The protein belongs to the radical SAM superfamily. RlmN family. Requires [4Fe-4S] cluster as cofactor.

Its subcellular location is the cytoplasm. It carries out the reaction adenosine(2503) in 23S rRNA + 2 reduced [2Fe-2S]-[ferredoxin] + 2 S-adenosyl-L-methionine = 2-methyladenosine(2503) in 23S rRNA + 5'-deoxyadenosine + L-methionine + 2 oxidized [2Fe-2S]-[ferredoxin] + S-adenosyl-L-homocysteine. It catalyses the reaction adenosine(37) in tRNA + 2 reduced [2Fe-2S]-[ferredoxin] + 2 S-adenosyl-L-methionine = 2-methyladenosine(37) in tRNA + 5'-deoxyadenosine + L-methionine + 2 oxidized [2Fe-2S]-[ferredoxin] + S-adenosyl-L-homocysteine. Functionally, specifically methylates position 2 of adenine 2503 in 23S rRNA and position 2 of adenine 37 in tRNAs. This chain is Probable dual-specificity RNA methyltransferase RlmN, found in Heliobacterium modesticaldum (strain ATCC 51547 / Ice1).